We begin with the raw amino-acid sequence, 172 residues long: Putative phosphoesterase Bcer98_0945 (172 aa).

His34 acts as the Proton donor in catalysis. 2 consecutive short sequence motifs (HXTX) follow at residues 34–37 and 115–118; these read HITL and HLTI. His115 acts as the Proton acceptor in catalysis.

Belongs to the 2H phosphoesterase superfamily. YjcG family.

This Bacillus cytotoxicus (strain DSM 22905 / CIP 110041 / 391-98 / NVH 391-98) protein is Putative phosphoesterase Bcer98_0945.